A 506-amino-acid chain; its full sequence is Maturase K (506 aa).

It belongs to the intron maturase 2 family. MatK subfamily.

The protein localises to the plastid. Its subcellular location is the chloroplast. Functionally, usually encoded in the trnK tRNA gene intron. Probably assists in splicing its own and other chloroplast group II introns. This Melilotus albus (White sweet clover) protein is Maturase K.